The sequence spans 362 residues: MSTIIVSSPVTAGLASRFKAHGLKLKTVVLFDTNTRKLFGEQVLRTLADEGFMVHELVVPAREASKSFSTAYKLYGGMIEAGVDRSWNLLAVGGGVVGDLGGFIAASYYRGIPVIQLPTTLLAMTDSSIGGKVAINHPLGKNLIGFFHLPELVLIDPSYLGTLPEREVYSGLSEVVKYGFIADSALLERLRSHFSSIVALEEPYLTDAIRRSAEIKEAVVREDFREMSGLRATLNFGHTFAHGLEKLADYRFIRHGEAVTIGMAAALSLSRRLGFLDRPSLEQGQSIIAEFRFPRGLLKKRFLDIDAPALLENMLSDKKKLDSRLRFVLLKALGEAFLLEEDVDDREVLGAIEDAKTFFRKQ.

NAD(+) is bound by residues 95–99 (GVVGD), 119–120 (TT), lysine 132, and lysine 141. Glutamate 174, histidine 238, and histidine 255 together coordinate Zn(2+).

This sequence belongs to the sugar phosphate cyclases superfamily. Dehydroquinate synthase family. Co(2+) serves as cofactor. Zn(2+) is required as a cofactor. Requires NAD(+) as cofactor.

It is found in the cytoplasm. The enzyme catalyses 7-phospho-2-dehydro-3-deoxy-D-arabino-heptonate = 3-dehydroquinate + phosphate. It functions in the pathway metabolic intermediate biosynthesis; chorismate biosynthesis; chorismate from D-erythrose 4-phosphate and phosphoenolpyruvate: step 2/7. In terms of biological role, catalyzes the conversion of 3-deoxy-D-arabino-heptulosonate 7-phosphate (DAHP) to dehydroquinate (DHQ). This chain is 3-dehydroquinate synthase, found in Chlorobium luteolum (strain DSM 273 / BCRC 81028 / 2530) (Pelodictyon luteolum).